The sequence spans 132 residues: Protein C10 (132 aa).

An N-acetylalanine modification is found at Ala-2.

This sequence belongs to the UPF0456 family.

The protein localises to the cytoplasm. In terms of biological role, in brain, may be required for corpus callosum development. The chain is Protein C10 from Bos taurus (Bovine).